The sequence spans 37 residues: Mu-thomitoxin-Hme1a (37 aa).

3 disulfides stabilise this stretch: Cys2/Cys18, Cys9/Cys22, and Cys17/Cys33. Position 37 is a phenylalanine amide (Phe37).

The protein belongs to the neurotoxin 01 (U2-agtx) family. In terms of processing, contains 3 disulfide bonds. In terms of tissue distribution, expressed by the venom gland.

It localises to the secreted. Functionally, blocks the Nav1.2/SCN2A, Nav1.4/SCN4A, and Nav1.6/SCN8A sodium channels. Reduces the peak amplitude of the sodium current and negatively shifts the steady-state inactivation process. Does not shift the threshold potential of activation or the voltage corresponding to maximal current. Does not change the reversal potential of the sodium current. May act on site 1 of the receptor. This is Mu-thomitoxin-Hme1a from Heriaeus mellotteei (Crab spider).